Here is a 432-residue protein sequence, read N- to C-terminus: Eukaryotic translation initiation factor 3 subunit M (432 aa).

Positions 184–356 (EEEEAYQHIL…KVFLIHSVRY (173 aa)) constitute a PCI domain. Basic and acidic residues-rich tracts occupy residues 392 to 401 (AQQEAERKLV) and 423 to 432 (QHRERNDNDD). The interval 392-432 (AQQEAERKLVEASTQHNNDRGNQRRGGNRGQQHRERNDNDD) is disordered.

Belongs to the eIF-3 subunit M family. Component of the eukaryotic translation initiation factor 3 (eIF-3) complex.

It is found in the cytoplasm. In terms of biological role, component of the eukaryotic translation initiation factor 3 (eIF-3) complex, which is involved in protein synthesis of a specialized repertoire of mRNAs and, together with other initiation factors, stimulates binding of mRNA and methionyl-tRNAi to the 40S ribosome. The eIF-3 complex specifically targets and initiates translation of a subset of mRNAs involved in cell proliferation. This is Eukaryotic translation initiation factor 3 subunit M from Pyricularia oryzae (strain 70-15 / ATCC MYA-4617 / FGSC 8958) (Rice blast fungus).